The sequence spans 122 residues: Large ribosomal subunit protein uL14 (122 aa).

It belongs to the universal ribosomal protein uL14 family. In terms of assembly, part of the 50S ribosomal subunit. Forms a cluster with proteins L3 and L19. In the 70S ribosome, L14 and L19 interact and together make contacts with the 16S rRNA in bridges B5 and B8.

Functionally, binds to 23S rRNA. Forms part of two intersubunit bridges in the 70S ribosome. The chain is Large ribosomal subunit protein uL14 from Vesicomyosocius okutanii subsp. Calyptogena okutanii (strain HA).